An 81-amino-acid chain; its full sequence is Defensin-like protein 153 (81 aa).

A signal peptide spans 1 to 26 (MKNVSQVSVAVLLIFSILVLGIGVQG). Intrachain disulfides connect cysteine 30-cysteine 81, cysteine 41-cysteine 60, cysteine 46-cysteine 75, and cysteine 50-cysteine 77.

It belongs to the DEFL family.

It is found in the secreted. The protein is Defensin-like protein 153 (LCR31) of Arabidopsis thaliana (Mouse-ear cress).